Consider the following 552-residue polypeptide: HTH-type transcriptional regulator SgrR (552 aa).

Positions 1 to 116 constitute an HTH marR-type domain; sequence MPSARLQQQF…LVSHLGRSFR (116 aa). A DNA-binding region (H-T-H motif) is located at residues 26–49; sequence LNELAALLSCSRRHMRTLLNTMQD. The solute-binding stretch occupies residues 163 to 492; it reads ELEADIAHHW…IDWQADAARW (330 aa).

Functionally, activates the small RNA gene sgrS under glucose-phosphate stress conditions as well as yfdZ. Represses its own transcription under both stress and non-stress conditions. Might act as a sensor of the intracellular accumulation of phosphoglucose by binding these molecules in its C-terminal solute-binding domain. The sequence is that of HTH-type transcriptional regulator SgrR from Shigella dysenteriae serotype 1 (strain Sd197).